The sequence spans 430 residues: Proteinase-activated receptor 1 (430 aa).

A signal peptide spans 1 to 21 (MGPRRLLIVALGLSLCGPLLS). Positions 22-41 (SRVPMSQPESERTDATVNPR) are cleaved as a propeptide — removed for receptor activation. The Extracellular portion of the chain corresponds to 42–107 (SFFLRNPSEN…SGYLTSPWLT (66 aa)). N-linked (GlcNAc...) asparagine glycosylation is found at N67 and N80. A helical membrane pass occupies residues 108-133 (LFMPSVYTIVFIVSLPLNVLAIAVFV). The Cytoplasmic portion of the chain corresponds to 134-142 (LRMKVKKPA). The chain crosses the membrane as a helical span at residues 143 to 162 (VVYMLHLAMADVLFVSVLPF). The Extracellular portion of the chain corresponds to 163-181 (KISYYFSGTDWQFGSGMCR). Cysteines 180 and 259 form a disulfide. The helical transmembrane segment at 182–203 (FATAAFYGNMYASIMLMTVISI) threads the bilayer. Residues 204–223 (DRFLAVVYPIQSLSWRTLGR) lie on the Cytoplasmic side of the membrane. The chain crosses the membrane as a helical span at residues 224–244 (ANFTCVVIWVMAIMGVVPLLL). Over 245 to 273 (KEQTTRVPGLNITTCHDVLSENLMQGFYS) the chain is Extracellular. N-linked (GlcNAc...) asparagine glycosylation is present at N255. A helical membrane pass occupies residues 274-293 (YYFSAFSAIFFLVPLIVSTV). Residues 294–316 (CYTSIIRCLSSSAVANRSKKSRA) are Cytoplasmic-facing. The helical transmembrane segment at 317-339 (LFLSAAVFCIFIVCFGPTNVLLI) threads the bilayer. The Extracellular portion of the chain corresponds to 340–354 (VHYLFLSDSPGTEAA). Residues 355-379 (YFAYLLCVCVSSVSCCIDPLIYYYA) form a helical membrane-spanning segment. Residues 380-430 (SSECQRHLYSILCCKESSDPNSCNSTGQLMPSKMDTCSSHLNNSIYKKLLA) lie on the Cytoplasmic side of the membrane. At S423 the chain carries Phosphoserine.

It belongs to the G-protein coupled receptor 1 family. Post-translationally, proteolytic cleavage by thrombin generates a new N-terminus that functions as a tethered ligand. Also proteolytically cleaved by cathepsin CTSG. In terms of processing, phosphorylated in the C-terminal tail; probably mediating desensitization prior to the uncoupling and internalization of the receptor.

It localises to the cell membrane. In terms of biological role, high affinity receptor that binds the activated thrombin, leading to calcium release from intracellular stores. The thrombin-activated receptor signaling pathway is mediated through PTX-insensitive G proteins, activation of phospholipase C resulting in the production of 1D-myo-inositol 1,4,5-trisphosphate (InsP3) which binds to InsP3 receptors causing calcium release from the stores. In astrocytes, the calcium released into the cytosol allows the Ca(2+)-dependent release of L-glutamate into the synaptic cleft through BEST1, that targets the neuronal postsynaptic GRIN2A/NMDAR receptor resulting in the synaptic plasticity regulation. May play a role in platelets activation and in vascular development. Mediates up-regulation of pro-inflammatory cytokines, such as MCP-1/CCL2 and IL6, triggered by coagulation factor Xa (F10) in cardiac fibroblasts and umbilical vein endothelial cells. The sequence is that of Proteinase-activated receptor 1 from Mus musculus (Mouse).